A 217-amino-acid chain; its full sequence is Adenylate kinase (217 aa).

ATP is bound at residue 10–15 (GAGKGT). Positions 30–59 (STGDIFRKNVADDTPLGRLAKQYMDAGDLV) are NMP. AMP is bound by residues Thr-31, Arg-36, 57–59 (DLV), 85–88 (GFPR), and Gln-92. The LID stretch occupies residues 126–163 (GRRTCADCAHVWHVTYDPPTVDGVCDLCGGKLFQREDD). Arg-127 is a binding site for ATP. 4 residues coordinate Zn(2+): Cys-130, Cys-133, Cys-150, and Cys-153. The AMP site is built by Arg-160 and Arg-171. Residue Gly-199 coordinates ATP.

Belongs to the adenylate kinase family. Monomer.

The protein resides in the cytoplasm. It catalyses the reaction AMP + ATP = 2 ADP. It functions in the pathway purine metabolism; AMP biosynthesis via salvage pathway; AMP from ADP: step 1/1. Its function is as follows. Catalyzes the reversible transfer of the terminal phosphate group between ATP and AMP. Plays an important role in cellular energy homeostasis and in adenine nucleotide metabolism. This Acidothermus cellulolyticus (strain ATCC 43068 / DSM 8971 / 11B) protein is Adenylate kinase.